A 66-amino-acid polypeptide reads, in one-letter code: Large ribosomal subunit protein bL35 (66 aa).

The disordered stretch occupies residues 22-41 (VMSAQRGKRHGMIKRTKKQI). The segment covering 27–41 (RGKRHGMIKRTKKQI) has biased composition (basic residues).

This sequence belongs to the bacterial ribosomal protein bL35 family.

This Rhodopseudomonas palustris (strain TIE-1) protein is Large ribosomal subunit protein bL35.